The primary structure comprises 405 residues: Argininosuccinate synthase (405 aa).

Residues 10-18 (AYSGGLDTS) and A37 each bind ATP. L-citrulline is bound by residues Y88 and S93. G118 contacts ATP. L-aspartate-binding residues include T120, N124, and D125. Residue N124 coordinates L-citrulline. Positions 128, 177, 186, 263, and 275 each coordinate L-citrulline.

It belongs to the argininosuccinate synthase family. Type 1 subfamily. Homotetramer.

Its subcellular location is the cytoplasm. It carries out the reaction L-citrulline + L-aspartate + ATP = 2-(N(omega)-L-arginino)succinate + AMP + diphosphate + H(+). The protein operates within amino-acid biosynthesis; L-arginine biosynthesis; L-arginine from L-ornithine and carbamoyl phosphate: step 2/3. The polypeptide is Argininosuccinate synthase (Acetivibrio thermocellus (strain ATCC 27405 / DSM 1237 / JCM 9322 / NBRC 103400 / NCIMB 10682 / NRRL B-4536 / VPI 7372) (Clostridium thermocellum)).